The primary structure comprises 399 residues: CCA-adding enzyme (399 aa).

The ATP site is built by Gly-32 and Arg-35. Residues Gly-32 and Arg-35 each contribute to the CTP site. Mg(2+) contacts are provided by Asp-45 and Asp-47. ATP-binding residues include Arg-116, Asp-159, Arg-162, Arg-165, and Arg-168. CTP is bound by residues Arg-116, Asp-159, Arg-162, Arg-165, and Arg-168.

It belongs to the tRNA nucleotidyltransferase/poly(A) polymerase family. Bacterial CCA-adding enzyme type 3 subfamily. As to quaternary structure, homodimer. Requires Mg(2+) as cofactor.

It carries out the reaction a tRNA precursor + 2 CTP + ATP = a tRNA with a 3' CCA end + 3 diphosphate. The enzyme catalyses a tRNA with a 3' CCA end + 2 CTP + ATP = a tRNA with a 3' CCACCA end + 3 diphosphate. Catalyzes the addition and repair of the essential 3'-terminal CCA sequence in tRNAs without using a nucleic acid template. Adds these three nucleotides in the order of C, C, and A to the tRNA nucleotide-73, using CTP and ATP as substrates and producing inorganic pyrophosphate. tRNA 3'-terminal CCA addition is required both for tRNA processing and repair. Also involved in tRNA surveillance by mediating tandem CCA addition to generate a CCACCA at the 3' terminus of unstable tRNAs. While stable tRNAs receive only 3'-terminal CCA, unstable tRNAs are marked with CCACCA and rapidly degraded. The chain is CCA-adding enzyme from Streptococcus pneumoniae serotype 4 (strain ATCC BAA-334 / TIGR4).